Consider the following 500-residue polypeptide: FAD-linked oxidoreductase chyH (500 aa).

The first 20 residues, 1-20, serve as a signal peptide directing secretion; it reads MRLQAVTAVAAWAVASACQS. Residues 65–235 form the FAD-binding PCMH-type domain; that stretch reads LEVPTVNIVI…TSVTSKTYDI (171 aa). N-linked (GlcNAc...) asparagine glycosylation is found at asparagine 199, asparagine 266, asparagine 275, and asparagine 383.

Belongs to the oxygen-dependent FAD-linked oxidoreductase family. FAD serves as cofactor.

Its pathway is pigment biosynthesis. Functionally, FAD-linked oxidoreductase; part of the gene cluster that mediates the biosynthesis of the yellow pigment chrysogine. the NRPS chyA mediates the condensation of anthranilic acid and alanine into the intermediate 2-(2-aminopropanamido)benzoic acid. The remainder of the pathway is highly branched yielding at least 13 chrysogine-related compounds. The malonyl transferase chyE converts 2-(2-aminopropanamido)benzoic acid and 2-(2-aminopropanamido)benzamidine into 2-(2-(2-carboxyacetamido)propanamido)benzoic acid and 3-((1-((2-carbamoylphenyl)amino)-1-oxopropan-2-yl)amino)-3-oxopropanoic acid, respectively. ChyD is an amidase, being responsible for the amidation of the carboxylic acid moiety of 2-(2-aminopropanamido)benzoic acid, 2-(2-(2-carboxyacetamido)propanamido)benzoic acid and 2-(2-((4-amino-1-carboxy-4-oxobutyl)amino)propanamido)benzoic acid. ChyC is involved in the same reactions as ChyD, but plays a more minor role in the amidation reactions compared to chyD. The oxidoreductases chyH and chyM are involved in oxidation reactions that form N-pyruvoylanthranilamide from 2-(2-aminopropanamido)benzamidine and (1-((2-carbamoylphenyl)amino)-1-oxopropan-2-yl)glutamine, respectively. N-pyruvoylanthranilamide is further converted via two further branches in the pathway, yielding chrysogine and additional chrysogine-related coumpounds. Chrysogine is likely formed by a spontaneous ring closure from N-pyruvoylanthranilamide. This Penicillium rubens (strain ATCC 28089 / DSM 1075 / NRRL 1951 / Wisconsin 54-1255) (Penicillium chrysogenum) protein is FAD-linked oxidoreductase chyH.